The sequence spans 424 residues: Subtilisin-like protease 2 (424 aa).

A signal peptide spans 1–17 (MQLLNLGLLLLLPFVAG). Positions 18 to 123 (EIAPQPEPLR…VHPDQHVYLA (106 aa)) are excised as a propeptide. The 87-residue stretch at 37-123 (QYIVTLKEGL…VHPDQHVYLA (87 aa)) folds into the Inhibitor I9 domain. The Peptidase S8 domain maps to 132 to 424 (RWGLGYMSSK…RKFTLPKNTK (293 aa)). Catalysis depends on charge relay system residues Asp170 and His202. 3 N-linked (GlcNAc...) asparagine glycosylation sites follow: Asn249, Asn262, and Asn350. The Charge relay system role is filled by Ser359. Asn390 carries N-linked (GlcNAc...) asparagine glycosylation.

The protein belongs to the peptidase S8 family.

Its subcellular location is the secreted. Its function is as follows. Secreted subtilisin-like serine protease with keratinolytic activity that contributes to pathogenicity. This Arthroderma otae (Microsporum canis) protein is Subtilisin-like protease 2 (SUB2).